We begin with the raw amino-acid sequence, 556 residues long: Oxygen-dependent choline dehydrogenase (556 aa).

Residue 6 to 35 (DYIIIGAGSAGNVLAARLTEDPGVTVLLLE) participates in FAD binding. The Proton acceptor role is filled by His-475.

The protein belongs to the GMC oxidoreductase family. FAD is required as a cofactor.

It catalyses the reaction choline + A = betaine aldehyde + AH2. The catalysed reaction is betaine aldehyde + NAD(+) + H2O = glycine betaine + NADH + 2 H(+). The protein operates within amine and polyamine biosynthesis; betaine biosynthesis via choline pathway; betaine aldehyde from choline (cytochrome c reductase route): step 1/1. Its function is as follows. Involved in the biosynthesis of the osmoprotectant glycine betaine. Catalyzes the oxidation of choline to betaine aldehyde and betaine aldehyde to glycine betaine at the same rate. This is Oxygen-dependent choline dehydrogenase from Xanthomonas euvesicatoria pv. vesicatoria (strain 85-10) (Xanthomonas campestris pv. vesicatoria).